Here is a 361-residue protein sequence, read N- to C-terminus: Beta-hexosaminidase (361 aa).

Residues Asp69, Arg77, Arg144, and 174 to 175 (KH) each bind substrate. The Proton donor/acceptor role is filled by His187. Residue Asp258 is the Nucleophile of the active site.

The protein belongs to the glycosyl hydrolase 3 family. NagZ subfamily.

The protein resides in the cytoplasm. It catalyses the reaction Hydrolysis of terminal non-reducing N-acetyl-D-hexosamine residues in N-acetyl-beta-D-hexosaminides.. It functions in the pathway cell wall biogenesis; peptidoglycan recycling. In terms of biological role, plays a role in peptidoglycan recycling by cleaving the terminal beta-1,4-linked N-acetylglucosamine (GlcNAc) from peptide-linked peptidoglycan fragments, giving rise to free GlcNAc, anhydro-N-acetylmuramic acid and anhydro-N-acetylmuramic acid-linked peptides. The polypeptide is Beta-hexosaminidase (Neisseria meningitidis serogroup A / serotype 4A (strain DSM 15465 / Z2491)).